Here is a 462-residue protein sequence, read N- to C-terminus: MANKELKRGLGARHIQMIALGGTIGVGLFMGSASTISWTGPSVLLAYAICGIFIFFIMRAMGEMLYVEPSTGSFATFGHQYIHPMAGYITAWSNWFQWIIVGMSEIIAVGSYTKYWFPDLPAWIPGIVAMVILGAANLISVKSFGEFEFWFAMIKIVTIILMIIAGIGIIFFGFGNGGDAIGLSNLWSHGGFFAGGFSGFFFALSLVIAAYQGVELIGITAGEAKDPQNTLRNAIQSIIWRILIFYIGAIFVIVTVYPWDELNSLGSPFVSTFSKIGITAAAGIINFVVITAAMSGCNSGIFSAGRMLYTLGVNGQAPKFFKKISRNGVPLYGTIAVLIGLAVGVVLNYIAPPKIFVYVYSASVLPGMIPWFIILISHIGFRKAKGAALDKHPFKMPFAPFTNYLTIAFLLMVLVGMWFNDDTRISLIVGVIFLALVVISYYVFGIGKRTQANLTKSEQAAE.

Helical transmembrane passes span 17-37, 38-58, 89-109, 121-141, 154-174, 190-210, 238-258, 276-296, 331-351, 355-375, 398-418, and 427-447; these read MIAL…STIS, WTGP…FFIM, ITAW…IIAV, PAWI…LISV, IKIV…FFGF, GGFF…VIAA, IIWR…TVYP, IGIT…AMSG, LYGT…NYIA, IFVY…FIIL, FAPF…VGMW, and LIVG…FGIG.

This sequence belongs to the amino acid-polyamine-organocation (APC) superfamily.

The protein localises to the cell membrane. Probable threonine transporter. Is also active as a minor serine permease. This is Probable threonine/serine transporter YbxG (ybxG) from Bacillus subtilis (strain 168).